The sequence spans 855 residues: DNA mismatch repair protein MutS (855 aa).

616–623 contributes to the ATP binding site; the sequence is GPNMGGKS.

It belongs to the DNA mismatch repair MutS family.

This protein is involved in the repair of mismatches in DNA. It is possible that it carries out the mismatch recognition step. This protein has a weak ATPase activity. This chain is DNA mismatch repair protein MutS, found in Salmonella paratyphi C (strain RKS4594).